The sequence spans 350 residues: Carbamoyl dehydratase HypE (350 aa).

Cys-350 bears the S-carbamoylcysteine mark. Cys-350 carries the S-cyanocysteine modification.

The protein belongs to the HypE family. Modified by HypF, which adds a carboxamido group to the thiolate of the C-terminal cysteine, yielding a protein-S-carboxamide. The carboxamido group is then dehydrated by HypE itself to yield a protein-thiocyanate.

The enzyme catalyses C-terminal S-carboxamide-L-cysteinyl-[HypE protein] + ATP = C-terminal S-cyanate-L-cysteinyl-[HypE protein] + ADP + phosphate + H(+). It participates in protein modification; [NiFe] hydrogenase maturation. Its function is as follows. Involved in the maturation of [NiFe] hydrogenases. Along with HypF, it catalyzes the synthesis of the CN ligands of the active site iron of [NiFe]-hydrogenases. HypE catalyzes the ATP-dependent dehydration of the carboxamido group attached to its C-terminal cysteine to a cyano group. The sequence is that of Carbamoyl dehydratase HypE from Rhizobium leguminosarum bv. viciae.